Here is a 658-residue protein sequence, read N- to C-terminus: Transcription factor E2-alpha (658 aa).

6 disordered regions span residues 42-82 (STQF…GTHY), 140-191 (SALS…YPAN), 276-313 (NPSVTSSFSSTPAQYGVSSHTPPISTGDTIIGNRGTAT), 331-372 (DHSS…SYDG), 460-558 (VPAQ…ERRV), and 628-658 (EEEKVSGVDPQMGLSGGHPGVGDSHNPVGHM). A Nuclear localization signal motif is present at residues 173–179 (PKKVRKV). Residues 276 to 303 (NPSVTSSFSSTPAQYGVSSHTPPISTGD) show a composition bias toward polar residues. The span at 333–344 (SSTNFSSTPSTP) shows a compositional bias: low complexity. Residues 345 to 355 (VGSPQGITGSG) show a composition bias toward polar residues. Over residues 493 to 507 (PDIKRESKEDEENRS) the composition is skewed to basic and acidic residues. The span at 533-544 (QDEDEDEDDDNL) shows a compositional bias: acidic residues. Residues 548–558 (QKAEREKERRV) show a composition bias toward basic and acidic residues. Residues 555–608 (ERRVANNARERLRVKDINEAFKELGRMCQLHLNSEKPQTKLLILHQAVSVILSL) enclose the bHLH domain.

Homodimer. Heterodimer; efficient DNA binding requires dimerization with another bHLH protein. Interacts with tgfb1i1.

It localises to the nucleus. In terms of biological role, transcriptional regulator involved in the initiation of neuronal differentiation and mesenchymal to epithelial transition. Heterodimers between tcf3 and tissue-specific basic helix-loop-helix (bHLH) proteins play major roles in determining tissue-specific cell fate during embryogenesis, like muscle or early B-cell differentiation. Together with tcf15, required for the mesenchymal to epithelial transition. Dimers bind DNA on E-box motifs: 5'-CANNTG-3'. The polypeptide is Transcription factor E2-alpha (tcf3) (Xenopus laevis (African clawed frog)).